The sequence spans 651 residues: Protein RcaC (651 aa).

The 115-residue stretch at 2-116 (KILLVEDDDV…ELIARIRALL (115 aa)) folds into the Response regulatory 1 domain. D51 is modified (4-aspartylphosphate). Residues 124 to 223 (FPLLTWGDLL…MHGRGYYLKA (100 aa)) constitute a DNA-binding region (ompR/PhoB-type). 2 consecutive Response regulatory domains span residues 384-519 (LLLM…VNLL) and 527-643 (KVMI…LRRL).

In terms of biological role, required for chromatic adaptation. Thought to be a positive regulator of phycobiliproteins. The sequence is that of Protein RcaC (rcaC) from Microchaete diplosiphon (Fremyella diplosiphon).